A 214-amino-acid polypeptide reads, in one-letter code: Transcriptional regulatory protein ComA (214 aa).

Positions Lys-3 to Leu-121 constitute a Response regulatory domain. Asp-55 carries the 4-aspartylphosphate modification. The HTH luxR-type domain maps to Ser-147–Gly-212. The H-T-H motif DNA-binding region spans Asn-171 to Thr-190.

Post-translationally, phosphorylated by ComP.

Its subcellular location is the cytoplasm. In terms of biological role, response regulator in the two-component regulatory system ComP/ComA involved in a major quorum response pathway that regulates the development of genetic competence. Regulates directly the expression of over 20 genes, including genes of the srfA operon, degQ, rapA, rapC, rapE, rapF, etc. Regulates indirectly, through the regulation of comK transcription, the expression of late competence genes. This chain is Transcriptional regulatory protein ComA (comA), found in Bacillus subtilis (strain 168).